Here is a 186-residue protein sequence, read N- to C-terminus: NADH-dependent FMN reductase SfnF (186 aa).

The protein belongs to the SsuE family.

It catalyses the reaction FMNH2 + NAD(+) = FMN + NADH + 2 H(+). In terms of biological role, involved in the dimethyl sulfide degradation pathway. Catalyzes the NADH-dependent reduction of FMN. This is NADH-dependent FMN reductase SfnF from Pseudomonas putida (Arthrobacter siderocapsulatus).